The chain runs to 182 residues: Transcription repressor OFP11 (182 aa).

The tract at residues 62–94 (PLHRRHSSENPAGVFSTNRREEEEEDETTTSVS) is disordered. The OVATE domain occupies 104 to 169 (MKHIESPDPY…VSAFADTLLW (66 aa)).

As to expression, expressed in roots, rosette and cauline leaves, shoots, stems, flower buds and siliques.

It localises to the nucleus. Transcriptional repressor that may regulate multiple aspects of plant growth and development through the regulation of BEL1-LIKE (BLH) and KNOX TALE (KNAT) homeodomain transcription factors. This Arabidopsis thaliana (Mouse-ear cress) protein is Transcription repressor OFP11 (OFP11).